A 345-amino-acid chain; its full sequence is Protein RecA (345 aa).

65–72 (GPESSGKT) provides a ligand contact to ATP. Over residues 326–336 (EKFQPAEAARE) the composition is skewed to basic and acidic residues. The disordered stretch occupies residues 326–345 (EKFQPAEAAREEGDDEGEDE).

The protein belongs to the RecA family.

The protein localises to the cytoplasm. In terms of biological role, can catalyze the hydrolysis of ATP in the presence of single-stranded DNA, the ATP-dependent uptake of single-stranded DNA by duplex DNA, and the ATP-dependent hybridization of homologous single-stranded DNAs. It interacts with LexA causing its activation and leading to its autocatalytic cleavage. The polypeptide is Protein RecA (Stenotrophomonas maltophilia (strain K279a)).